The following is a 574-amino-acid chain: Cyclomaltodextrinase (574 aa).

Ca(2+) contacts are provided by Asn144, Asp146, Asn149, Asp150, Gly168, and Asp170. Residues His243 and Arg323 each contribute to the substrate site. Residue Asp325 is the Nucleophile of the active site. Glu354 (proton donor) is an active-site residue. Residues 420 to 421 (HD), Asp465, and Arg469 each bind substrate.

It belongs to the glycosyl hydrolase 13 family. In terms of assembly, monomer. Ca(2+) serves as cofactor.

The catalysed reaction is cyclomaltodextrin + H2O = linear maltodextrin. In terms of biological role, hydrolyzes cyclodextrins. Can also act on linear maltodextrins, with the exception of maltose. The chain is Cyclomaltodextrinase from Thermoanaerobacter pseudethanolicus (strain ATCC 33223 / 39E) (Clostridium thermohydrosulfuricum).